Here is a 182-residue protein sequence, read N- to C-terminus: Transcription termination/antitermination protein NusG (182 aa).

The protein belongs to the NusG family.

In terms of biological role, participates in transcription elongation, termination and antitermination. In Chlamydia pneumoniae (Chlamydophila pneumoniae), this protein is Transcription termination/antitermination protein NusG.